Here is a 445-residue protein sequence, read N- to C-terminus: Probable glycine dehydrogenase (decarboxylating) subunit 1 (445 aa).

It belongs to the GcvP family. N-terminal subunit subfamily. The glycine cleavage system is composed of four proteins: P, T, L and H. In this organism, the P 'protein' is a heterodimer of two subunits.

It carries out the reaction N(6)-[(R)-lipoyl]-L-lysyl-[glycine-cleavage complex H protein] + glycine + H(+) = N(6)-[(R)-S(8)-aminomethyldihydrolipoyl]-L-lysyl-[glycine-cleavage complex H protein] + CO2. Its function is as follows. The glycine cleavage system catalyzes the degradation of glycine. The P protein binds the alpha-amino group of glycine through its pyridoxal phosphate cofactor; CO(2) is released and the remaining methylamine moiety is then transferred to the lipoamide cofactor of the H protein. The sequence is that of Probable glycine dehydrogenase (decarboxylating) subunit 1 from Chlorobium chlorochromatii (strain CaD3).